A 314-amino-acid polypeptide reads, in one-letter code: MDLVRLTSLLPPSVMGGPTSPRPLWSNQGLPFRFQSKNRFSPVAAARASHAASPAELYWKIALPTSPMPGAIRDLINPARSASQEDTDMDEVSTDAVFFLEKDLFPGSKITLHFTRGGACAMVLLRGRADAIPFASEKLPEILTQLSVPAGSRAAEDMRTTLAECEAALLGARDQAKHCVTSLESMVEFAAASLGTRDIRAVSTEVIGTGAAETPRQEYTVEAVKPVVSVSGGNMVTCHGMPYAYAVFGCHTTTATAYAVTLAGADGTRAEALATCHGDAFPGVAEAYERVGVAAGSVPVCHIMPLGDMLWVRN.

Residues 1-16 form the signal peptide; sequence MDLVRLTSLLPPSVMG. The region spanning 98–314 is the BURP domain; it reads FFLEKDLFPG…PLGDMLWVRN (217 aa).

As to expression, expressed in shoot and panicles.

This is BURP domain-containing protein 8 (BURP8) from Oryza sativa subsp. japonica (Rice).